The following is a 131-amino-acid chain: Holo-[acyl-carrier-protein] synthase (131 aa).

Mg(2+) contacts are provided by aspartate 6 and glutamate 55.

The protein belongs to the P-Pant transferase superfamily. AcpS family. It depends on Mg(2+) as a cofactor.

The protein resides in the cytoplasm. The enzyme catalyses apo-[ACP] + CoA = holo-[ACP] + adenosine 3',5'-bisphosphate + H(+). Its function is as follows. Transfers the 4'-phosphopantetheine moiety from coenzyme A to a Ser of acyl-carrier-protein. The chain is Holo-[acyl-carrier-protein] synthase from Verminephrobacter eiseniae (strain EF01-2).